A 1213-amino-acid chain; its full sequence is tRNA wybutosine-synthesizing protein 4 (1213 aa).

2 stretches are compositionally biased toward low complexity: residues 1-13 (METT…PATT) and 39-52 (ATTT…TTPT). Residues 1-76 (METTEEVVAP…DDQVMGTNNS (76 aa)) form a disordered region. Residues 53–67 (HNEHASAKDPRKAQD) are compositionally biased toward basic and acidic residues. 3 residues coordinate S-adenosyl-L-methionine: arginine 117, glycine 148, and aspartate 180. Residues 215-248 (STPAATTTAAATTTTTTELKTTAATASSTSTEAP) show a composition bias toward low complexity. The tract at residues 215-272 (STPAATTTAAATTTTTTELKTTAATASSTSTEAPQKPKKSPKPKDKSKAARAPAPTTA) is disordered. Residues 289 to 290 (DL) and glutamate 318 each bind S-adenosyl-L-methionine. Residues 879–900 (EPRSLPLRNQAPNGAEGNANGS) form a disordered region. Residues 1006-1166 (PTEKPAVLSD…YAAGKDVYGN (161 aa)) enclose the JmjC domain.

It belongs to the methyltransferase superfamily. LCMT family.

The enzyme catalyses 7-[(3S)-3-amino-3-carboxypropyl]wyosine(37) in tRNA(Phe) + S-adenosyl-L-methionine = 7-[(3S)-(3-amino-3-methoxycarbonyl)propyl]wyosine(37) in tRNA(Phe) + S-adenosyl-L-homocysteine. It catalyses the reaction 7-[(3S)-(3-amino-3-methoxycarbonyl)propyl]wyosine(37) in tRNA(Phe) + S-adenosyl-L-methionine + CO2 = wybutosine(37) in tRNA(Phe) + S-adenosyl-L-homocysteine + 2 H(+). It participates in tRNA modification; wybutosine-tRNA(Phe) biosynthesis. In terms of biological role, probable S-adenosyl-L-methionine-dependent methyltransferase that acts as a component of the wybutosine biosynthesis pathway. Wybutosine is a hyper modified guanosine with a tricyclic base found at the 3'-position adjacent to the anticodon of eukaryotic phenylalanine tRNA. May methylate the carboxyl group of leucine residues to form alpha-leucine ester residues. This is tRNA wybutosine-synthesizing protein 4 (lcm-2) from Neurospora crassa (strain ATCC 24698 / 74-OR23-1A / CBS 708.71 / DSM 1257 / FGSC 987).